The sequence spans 127 residues: Fluoride-specific ion channel FluC (127 aa).

4 consecutive transmembrane segments (helical) span residues 1 to 21 (MMSYLIVFFGAGIGGMARHMV), 32 to 52 (EFPFGTLFINMLGSFLIGAVV), 71 to 91 (TGILGGFTTFSAFSLETVLLY), and 96 to 116 (VFLAASYAVASVTLSVGALLL). The Na(+) site is built by G75 and T78.

It belongs to the fluoride channel Fluc/FEX (TC 1.A.43) family.

Its subcellular location is the cell inner membrane. It catalyses the reaction fluoride(in) = fluoride(out). Its activity is regulated as follows. Na(+) is not transported, but it plays an essential structural role and its presence is essential for fluoride channel function. Its function is as follows. Fluoride-specific ion channel. Important for reducing fluoride concentration in the cell, thus reducing its toxicity. The chain is Fluoride-specific ion channel FluC from Granulibacter bethesdensis (strain ATCC BAA-1260 / CGDNIH1).